We begin with the raw amino-acid sequence, 79 residues long: Morintide mO2 (79 aa).

The signal sequence occupies residues 1–20; sequence MAKLSFLSLFLLCLVATATA. Positions 21-63 constitute a Chitin-binding type-1 domain; the sequence is QNCGRQAGNRACANGLCCSQYGFCGSTSEYCSRANGCQSNCRG. Intrachain disulfides connect Cys-23/Cys-38, Cys-32/Cys-44, Cys-37/Cys-51, and Cys-57/Cys-61. Positions 64-79 are excised as a propeptide; the sequence is GGGAGGAGGGAGGGSP.

Leaves (at protein level).

In terms of biological role, chitin-binding protein which functions in defense against chitin-containing fungal pathogens. The sequence is that of Morintide mO2 from Moringa oleifera (Horseradish tree).